We begin with the raw amino-acid sequence, 186 residues long: Protein GrpE (186 aa).

Over residues 1 to 22 (MSDSNKEKKKKFADMVSKRKGD) the composition is skewed to basic and acidic residues. The tract at residues 1-35 (MSDSNKEKKKKFADMVSKRKGDDQEDQQTGDLSEE) is disordered. Acidic residues predominate over residues 23–34 (DQEDQQTGDLSE).

Belongs to the GrpE family. In terms of assembly, homodimer.

The protein resides in the cytoplasm. Its function is as follows. Participates actively in the response to hyperosmotic and heat shock by preventing the aggregation of stress-denatured proteins, in association with DnaK and GrpE. It is the nucleotide exchange factor for DnaK and may function as a thermosensor. Unfolded proteins bind initially to DnaJ; upon interaction with the DnaJ-bound protein, DnaK hydrolyzes its bound ATP, resulting in the formation of a stable complex. GrpE releases ADP from DnaK; ATP binding to DnaK triggers the release of the substrate protein, thus completing the reaction cycle. Several rounds of ATP-dependent interactions between DnaJ, DnaK and GrpE are required for fully efficient folding. This is Protein GrpE from Wolbachia pipientis subsp. Culex pipiens (strain wPip).